Here is a 259-residue protein sequence, read N- to C-terminus: Indole-3-glycerol phosphate synthase (259 aa).

It belongs to the TrpC family.

It catalyses the reaction 1-(2-carboxyphenylamino)-1-deoxy-D-ribulose 5-phosphate + H(+) = (1S,2R)-1-C-(indol-3-yl)glycerol 3-phosphate + CO2 + H2O. It participates in amino-acid biosynthesis; L-tryptophan biosynthesis; L-tryptophan from chorismate: step 4/5. This chain is Indole-3-glycerol phosphate synthase, found in Rhodopirellula baltica (strain DSM 10527 / NCIMB 13988 / SH1).